Consider the following 407-residue polypeptide: MANKPVKKVVLAYSGGLDTSIILKWLQTEYGAEVVTFTADLGQGEEIEPARAKALAAGVKPENIFIEDVREEFVRDYVFPMFRANTVYEGQYLLGTSIARPLIAKKQIEIARKVGADAVSHGATGKGNDQVRFELGYYALEPDIHVIAPWREWDFKSREALLDFAEKHQIQIAKDKRGEAPFSVDANLLHSSSEGKVLEDPAVEAPEFVHMRTIAPEDAPDKPHIFTLDFERGDAVAIDGVAMSPATILTKLNELGHDNGVGRLDLVENRFVGMKSRGVYETPGGTILLAAHRGIESITLDRGSMHLKDELMPKYASLVYNGFWFSPEREMLQAAIDYSQAKVAGQVRVKLYKGNVSIIGRTSPYSLYDQDLVTFEEGKVAYDHRDAGGFIKLNALRLRVLAKRDKR.

Residues 12–20 (AYSGGLDTS) and alanine 39 each bind ATP. The L-citrulline site is built by tyrosine 92 and serine 97. Residue glycine 122 participates in ATP binding. L-aspartate is bound by residues threonine 124, asparagine 128, and aspartate 129. An L-citrulline-binding site is contributed by asparagine 128. L-citrulline-binding residues include arginine 132, serine 183, serine 192, glutamate 268, and tyrosine 280.

The protein belongs to the argininosuccinate synthase family. Type 1 subfamily. In terms of assembly, homotetramer.

The protein resides in the cytoplasm. The enzyme catalyses L-citrulline + L-aspartate + ATP = 2-(N(omega)-L-arginino)succinate + AMP + diphosphate + H(+). Its pathway is amino-acid biosynthesis; L-arginine biosynthesis; L-arginine from L-ornithine and carbamoyl phosphate: step 2/3. This chain is Argininosuccinate synthase, found in Caulobacter sp. (strain K31).